The sequence spans 49 residues: Large ribosomal subunit protein bL33 (49 aa).

The protein belongs to the bacterial ribosomal protein bL33 family.

This is Large ribosomal subunit protein bL33 from Thermosipho melanesiensis (strain DSM 12029 / CIP 104789 / BI429).